Reading from the N-terminus, the 255-residue chain is MKHVAKKRFGQNFLTDRAIINSLIDAIAPQPQDCMVEIGPGLGAMTQPLLERLQHLHVVEIDRDIIQWMQGHYPQDKLTIYASDALKFNFGNISDRLRVVGNLPYNISTPILFHLLDNVPHIIDMHFMLQKEVVERMVAAPSSAAYGRLSVMLQYRLHMEYLLTVPPEAFDPAPKVESAFVRAVPYTVLPHPAKDEALLGRIVTAAFAQRRKTLRNTLKGLLDDTGFASLGIDPQLRAENIAPAGFVAIANYLAA.

6 residues coordinate S-adenosyl-L-methionine: Asn-12, Leu-14, Gly-39, Glu-60, Asp-84, and Asn-102.

This sequence belongs to the class I-like SAM-binding methyltransferase superfamily. rRNA adenine N(6)-methyltransferase family. RsmA subfamily.

It localises to the cytoplasm. It catalyses the reaction adenosine(1518)/adenosine(1519) in 16S rRNA + 4 S-adenosyl-L-methionine = N(6)-dimethyladenosine(1518)/N(6)-dimethyladenosine(1519) in 16S rRNA + 4 S-adenosyl-L-homocysteine + 4 H(+). In terms of biological role, specifically dimethylates two adjacent adenosines (A1518 and A1519) in the loop of a conserved hairpin near the 3'-end of 16S rRNA in the 30S particle. May play a critical role in biogenesis of 30S subunits. This Methylobacillus flagellatus (strain ATCC 51484 / DSM 6875 / VKM B-1610 / KT) protein is Ribosomal RNA small subunit methyltransferase A.